The following is a 240-amino-acid chain: UPF0173 metal-dependent hydrolase OE_2513F (240 aa).

The protein belongs to the UPF0173 family.

The protein is UPF0173 metal-dependent hydrolase OE_2513F of Halobacterium salinarum (strain ATCC 29341 / DSM 671 / R1).